A 339-amino-acid chain; its full sequence is Fructose-1,6-bisphosphatase class 1 (339 aa).

Residues glutamate 91, aspartate 113, leucine 115, and aspartate 116 each contribute to the Mg(2+) site. Substrate-binding positions include 116 to 119 (DGSS), asparagine 210, and lysine 276. Mg(2+) is bound at residue glutamate 282.

Belongs to the FBPase class 1 family. In terms of assembly, homotetramer. Requires Mg(2+) as cofactor.

It localises to the cytoplasm. The catalysed reaction is beta-D-fructose 1,6-bisphosphate + H2O = beta-D-fructose 6-phosphate + phosphate. The protein operates within carbohydrate biosynthesis; gluconeogenesis. The protein is Fructose-1,6-bisphosphatase class 1 of Bordetella bronchiseptica (strain ATCC BAA-588 / NCTC 13252 / RB50) (Alcaligenes bronchisepticus).